A 201-amino-acid chain; its full sequence is Small ribosomal subunit protein uS4c (201 aa).

The region spanning 89-150 (MRLDNIVFRL…RQKSQAIITK (62 aa)) is the S4 RNA-binding domain.

It belongs to the universal ribosomal protein uS4 family. In terms of assembly, part of the 30S ribosomal subunit. Contacts protein S5. The interaction surface between S4 and S5 is involved in control of translational fidelity.

The protein localises to the plastid. It is found in the chloroplast. In terms of biological role, one of the primary rRNA binding proteins, it binds directly to 16S rRNA where it nucleates assembly of the body of the 30S subunit. Functionally, with S5 and S12 plays an important role in translational accuracy. The protein is Small ribosomal subunit protein uS4c (rps4) of Funaria hygrometrica (Moss).